A 415-amino-acid chain; its full sequence is Probable beta-1,4-xylosyltransferase IRX10L (415 aa).

A topological domain (cytoplasmic) is located at residue M1. A helical; Signal-anchor for type II membrane protein transmembrane segment spans residues 2–22 (KLSSCVLIFLLCNTFSSISAF). Over 23–415 (RLSRSQPTER…AGPVADLKPW (393 aa)) the chain is Lumenal. 2 N-linked (GlcNAc...) asparagine glycosylation sites follow: N142 and N403.

Belongs to the glycosyltransferase 47 family. As to expression, present in the xylem and phloem, and, to a lower extent, in interfascicular cells. Expressed in the root tip, shoot apical meristem (SAM), xylem cells of roots and stems, and in the vasculature of roots, cotyledons and leaves.

Its subcellular location is the golgi apparatus membrane. In terms of biological role, involved in the synthesis of the hemicellulose glucuronoxylan, a major component of secondary cell walls. Probably involved in the elongation of glucuronoxylan xylosyl backbone. This Arabidopsis thaliana (Mouse-ear cress) protein is Probable beta-1,4-xylosyltransferase IRX10L (IRX10L).